Reading from the N-terminus, the 204-residue chain is Urease accessory protein UreG (204 aa).

15–22 (GPVGSGKT) serves as a coordination point for GTP.

The protein belongs to the SIMIBI class G3E GTPase family. UreG subfamily. As to quaternary structure, homodimer. UreD, UreF and UreG form a complex that acts as a GTP-hydrolysis-dependent molecular chaperone, activating the urease apoprotein by helping to assemble the nickel containing metallocenter of UreC. The UreE protein probably delivers the nickel.

The protein localises to the cytoplasm. Functionally, facilitates the functional incorporation of the urease nickel metallocenter. This process requires GTP hydrolysis, probably effectuated by UreG. The polypeptide is Urease accessory protein UreG (Methylobacterium sp. (strain 4-46)).